We begin with the raw amino-acid sequence, 333 residues long: 4-hydroxy-3-methylbut-2-enyl diphosphate reductase (333 aa).

Cys-34 serves as a coordination point for [4Fe-4S] cluster. (2E)-4-hydroxy-3-methylbut-2-enyl diphosphate contacts are provided by His-63 and His-96. Positions 63 and 96 each coordinate dimethylallyl diphosphate. Residues His-63 and His-96 each coordinate isopentenyl diphosphate. Cys-118 is a [4Fe-4S] cluster binding site. A (2E)-4-hydroxy-3-methylbut-2-enyl diphosphate-binding site is contributed by His-146. His-146 is a dimethylallyl diphosphate binding site. Position 146 (His-146) interacts with isopentenyl diphosphate. Glu-148 (proton donor) is an active-site residue. Thr-186 serves as a coordination point for (2E)-4-hydroxy-3-methylbut-2-enyl diphosphate. Cys-216 is a binding site for [4Fe-4S] cluster. (2E)-4-hydroxy-3-methylbut-2-enyl diphosphate-binding residues include Ser-244, Ser-245, Asn-246, and Ser-289. Positions 244, 245, 246, and 289 each coordinate dimethylallyl diphosphate. Isopentenyl diphosphate contacts are provided by Ser-244, Ser-245, Asn-246, and Ser-289.

Belongs to the IspH family. The cofactor is [4Fe-4S] cluster.

The catalysed reaction is isopentenyl diphosphate + 2 oxidized [2Fe-2S]-[ferredoxin] + H2O = (2E)-4-hydroxy-3-methylbut-2-enyl diphosphate + 2 reduced [2Fe-2S]-[ferredoxin] + 2 H(+). It catalyses the reaction dimethylallyl diphosphate + 2 oxidized [2Fe-2S]-[ferredoxin] + H2O = (2E)-4-hydroxy-3-methylbut-2-enyl diphosphate + 2 reduced [2Fe-2S]-[ferredoxin] + 2 H(+). It participates in isoprenoid biosynthesis; dimethylallyl diphosphate biosynthesis; dimethylallyl diphosphate from (2E)-4-hydroxy-3-methylbutenyl diphosphate: step 1/1. It functions in the pathway isoprenoid biosynthesis; isopentenyl diphosphate biosynthesis via DXP pathway; isopentenyl diphosphate from 1-deoxy-D-xylulose 5-phosphate: step 6/6. In terms of biological role, catalyzes the conversion of 1-hydroxy-2-methyl-2-(E)-butenyl 4-diphosphate (HMBPP) into a mixture of isopentenyl diphosphate (IPP) and dimethylallyl diphosphate (DMAPP). Acts in the terminal step of the DOXP/MEP pathway for isoprenoid precursor biosynthesis. This Mycobacterium sp. (strain JLS) protein is 4-hydroxy-3-methylbut-2-enyl diphosphate reductase.